A 266-amino-acid polypeptide reads, in one-letter code: Glucosamine-6-phosphate deaminase (266 aa).

Asp-72 serves as the catalytic Proton acceptor; for enolization step. Catalysis depends on Asp-141, which acts as the For ring-opening step. His-143 (proton acceptor; for ring-opening step) is an active-site residue. Glu-148 functions as the For ring-opening step in the catalytic mechanism.

The protein belongs to the glucosamine/galactosamine-6-phosphate isomerase family. NagB subfamily. Homohexamer.

The enzyme catalyses alpha-D-glucosamine 6-phosphate + H2O = beta-D-fructose 6-phosphate + NH4(+). The protein operates within amino-sugar metabolism; N-acetylneuraminate degradation; D-fructose 6-phosphate from N-acetylneuraminate: step 5/5. Allosterically activated by N-acetylglucosamine 6-phosphate (GlcNAc6P). Its function is as follows. Catalyzes the reversible isomerization-deamination of glucosamine 6-phosphate (GlcN6P) to form fructose 6-phosphate (Fru6P) and ammonium ion. The polypeptide is Glucosamine-6-phosphate deaminase (Yersinia pestis bv. Antiqua (strain Antiqua)).